The primary structure comprises 692 residues: Putative receptor-like protein kinase At1g80870 (692 aa).

Residues 20 to 40 (LFLILTISSSLVIFFAILYFI) traverse the membrane as a helical segment. In terms of domain architecture, Protein kinase spans 81 to 673 (FDESNVIGKG…GEMDISSTAF (593 aa)). Residues 87-95 (IGKGGSGTV) and K109 contribute to the ATP site. D206 acts as the Proton acceptor in catalysis. Disordered stretches follow at residues 427-446 (EISE…HRNM) and 511-533 (RRKS…GSEM). Basic residues-rich tracts occupy residues 432–444 (KNKR…KKHR) and 511–524 (RRKS…KKKN).

It belongs to the protein kinase superfamily. Ser/Thr protein kinase family.

It localises to the cell membrane. It catalyses the reaction L-seryl-[protein] + ATP = O-phospho-L-seryl-[protein] + ADP + H(+). The catalysed reaction is L-threonyl-[protein] + ATP = O-phospho-L-threonyl-[protein] + ADP + H(+). This Arabidopsis thaliana (Mouse-ear cress) protein is Putative receptor-like protein kinase At1g80870.